Reading from the N-terminus, the 665-residue chain is Alpha-1,4-glucan:maltose-1-phosphate maltosyltransferase (665 aa).

3 residues coordinate alpha-maltose 1-phosphate: Lys255, Gln315, and Asp350. The Nucleophile role is filled by Asp386. Residue Asn387 participates in alpha-maltose 1-phosphate binding. The Proton donor role is filled by Glu415. 526 to 527 (KY) contacts alpha-maltose 1-phosphate.

This sequence belongs to the glycosyl hydrolase 13 family. GlgE subfamily. Homodimer.

It catalyses the reaction alpha-maltose 1-phosphate + [(1-&gt;4)-alpha-D-glucosyl](n) = [(1-&gt;4)-alpha-D-glucosyl](n+2) + phosphate. In terms of biological role, maltosyltransferase that uses maltose 1-phosphate (M1P) as the sugar donor to elongate linear or branched alpha-(1-&gt;4)-glucans. Is involved in a branched alpha-glucan biosynthetic pathway from trehalose, together with TreS, Mak and GlgB. This Myxococcus xanthus (strain DK1622) protein is Alpha-1,4-glucan:maltose-1-phosphate maltosyltransferase.